Here is a 256-residue protein sequence, read N- to C-terminus: Homeobox protein Hox-D13a (256 aa).

A DNA-binding region (homeobox) is located at residues 191-250; sequence GRKKRVPYTKFQLKELEREYNTTKFITKENRRRIASSTNLSERQVTIWFQNRRVKDKKRP.

Belongs to the Abd-B homeobox family.

Its subcellular location is the nucleus. Sequence-specific transcription factor which is part of a developmental regulatory system that provides cells with specific positional identities on the anterior-posterior axis. This Danio rerio (Zebrafish) protein is Homeobox protein Hox-D13a (hoxd13a).